A 280-amino-acid chain; its full sequence is Protease HtpX (280 aa).

2 helical membrane-spanning segments follow: residues 7–26 (TFIL…GLLG) and 30–49 (GMLI…YWYS). His-129 lines the Zn(2+) pocket. Residue Glu-130 is part of the active site. His-133 contacts Zn(2+). Transmembrane regions (helical) follow at residues 146–166 (ATIA…SMFG) and 178–198 (VVGM…QMAI). Zn(2+) is bound at residue Glu-203.

Belongs to the peptidase M48B family. Zn(2+) serves as cofactor.

It localises to the cell inner membrane. The chain is Protease HtpX from Legionella pneumophila subsp. pneumophila (strain Philadelphia 1 / ATCC 33152 / DSM 7513).